The sequence spans 412 residues: Peptidase T (412 aa).

Zn(2+) is bound at residue histidine 81. Aspartate 83 is an active-site residue. Aspartate 144 contributes to the Zn(2+) binding site. Glutamate 178 functions as the Proton acceptor in the catalytic mechanism. Residues glutamate 179, aspartate 201, and histidine 383 each coordinate Zn(2+).

The protein belongs to the peptidase M20B family. The cofactor is Zn(2+).

It localises to the cytoplasm. The catalysed reaction is Release of the N-terminal residue from a tripeptide.. Its function is as follows. Cleaves the N-terminal amino acid of tripeptides. This is Peptidase T from Bacillus cereus (strain ZK / E33L).